The primary structure comprises 357 residues: Alkanal monooxygenase alpha chain (357 aa).

Belongs to the bacterial luciferase oxidoreductase family. In terms of assembly, heterodimer of an alpha and a beta chain.

The catalysed reaction is a long-chain fatty aldehyde + FMNH2 + O2 = a long-chain fatty acid + hnu + FMN + H2O + 2 H(+). Its function is as follows. Light-emitting reaction in luminous bacteria. The polypeptide is Alkanal monooxygenase alpha chain (luxA) (Kryptophanaron alfredi symbiont).